The primary structure comprises 595 residues: Putative laccase-18 (595 aa).

The N-terminal stretch at 1 to 29 is a signal peptide; the sequence is MEKLSTAASLFGVVVAATALAMAVVGGEA. Plastocyanin-like domains lie at 37-153 and 162-316; these read MVHE…PRDG and KDVP…YTGA. N-linked (GlcNAc...) asparagine glycosylation is found at Asn-42 and Asn-48. Positions 87 and 89 each coordinate Cu cation. Residue Asn-121 is glycosylated (N-linked (GlcNAc...) asparagine). His-132 and His-134 together coordinate Cu cation. N-linked (GlcNAc...) asparagine glycosylation is found at Asn-206, Asn-345, Asn-382, Asn-402, Asn-409, Asn-439, and Asn-470. The 143-residue stretch at 429–571 folds into the Plastocyanin-like 3 domain; that stretch reads DFPVRPPRPF…ATAFIVEDGP (143 aa). Residues Asn-488, His-491, His-493, His-550, Cys-551, His-552, His-556, and Met-561 each contribute to the Cu cation site. Residues 570–595 form a disordered region; the sequence is GPTPETSLPPPPPEFKRCGTNGLSQP.

It belongs to the multicopper oxidase family. Cu cation serves as cofactor.

The protein resides in the secreted. The protein localises to the extracellular space. It is found in the apoplast. It catalyses the reaction 4 hydroquinone + O2 = 4 benzosemiquinone + 2 H2O. Lignin degradation and detoxification of lignin-derived products. In Oryza sativa subsp. indica (Rice), this protein is Putative laccase-18 (LAC18).